Reading from the N-terminus, the 574-residue chain is Lengsin (574 aa).

2 disordered regions span residues 1 to 36 (MNDE…KVTK) and 66 to 131 (GNMS…IPTT). Residues 11–23 (NTRDEGNETEASR) show a composition bias toward basic and acidic residues. Residues 25 to 36 (SKLRRTRKKVTK) show a composition bias toward basic residues. A compositionally biased stretch (polar residues) spans 91–131 (NQTTVIKPSPLKTSASAPCSEFNTNSNHADNTWEDTQIPTT). The GS beta-grasp domain maps to 148-242 (NHLQFVRFEA…VICDTFTVTG (95 aa)). Positions 249 to 574 (PRYIAKRQLS…ERNKFLEYFI (326 aa)) constitute a GS catalytic domain.

It belongs to the glutamine synthetase family. As to quaternary structure, dodecamer. Interacts with BFSP2 and VIM.

In terms of biological role, may act as a component of the cytoskeleton or as a chaperone for the reorganization of intermediate filament proteins during terminal differentiation in the lens. Does not seem to have enzymatic activity. This chain is Lengsin (LGSN), found in Canis lupus familiaris (Dog).